The following is a 314-amino-acid chain: Bifunctional riboflavin kinase/FMN adenylyltransferase (314 aa).

This sequence belongs to the RibF family.

It catalyses the reaction riboflavin + ATP = FMN + ADP + H(+). It carries out the reaction FMN + ATP + H(+) = FAD + diphosphate. It participates in cofactor biosynthesis; FAD biosynthesis; FAD from FMN: step 1/1. It functions in the pathway cofactor biosynthesis; FMN biosynthesis; FMN from riboflavin (ATP route): step 1/1. Its function is as follows. Catalyzes the phosphorylation of riboflavin to FMN followed by the adenylation of FMN to FAD. Can also catalyze the phosphorylation of the toxic riboflavin analogs 8-demethyl-8-aminoriboflavin (AF) to 8-demethyl-8-aminoriboflavin mononucleotide (AFMN) and roseoflavin (RoF) to roseoflavin mononucleotide (RoFMN), and the adenylation of AFMN to 8-demethyl-8-aminoriboflavin adenine dinucleotide (AFAD). The sequence is that of Bifunctional riboflavin kinase/FMN adenylyltransferase from Listeria monocytogenes serovar 1/2a (strain ATCC BAA-679 / EGD-e).